The chain runs to 60 residues: Cytotoxin 3 (60 aa).

Intrachain disulfides connect cysteine 3/cysteine 21, cysteine 14/cysteine 38, cysteine 42/cysteine 53, and cysteine 54/cysteine 59.

This sequence belongs to the three-finger toxin family. Short-chain subfamily. Type IA cytotoxin sub-subfamily. As to quaternary structure, monomer in solution; Homodimer and oligomer in the presence of negatively charged lipids forming a pore with a size ranging between 20 and 30 Angstroms. In terms of tissue distribution, expressed by the venom gland.

It localises to the secreted. It is found in the target cell membrane. Shows cytolytic activity on many different cells by forming pore in lipid membranes. In vivo, increases heart rate or kills the animal by cardiac arrest. In addition, it binds to heparin with high affinity, interacts with Kv channel-interacting protein 1 (KCNIP1) in a calcium-independent manner, and binds to integrin alpha-V/beta-3 (ITGAV/ITGB3) with moderate affinity. The sequence is that of Cytotoxin 3 from Naja annulifera (Banded Egyptian cobra).